A 235-amino-acid polypeptide reads, in one-letter code: 7-cyano-7-deazaguanine synthase (235 aa).

ATP is bound at residue 16-26 (FSGGQDSTTCL). Zn(2+) contacts are provided by C195, C204, C207, and C210.

The protein belongs to the QueC family. Zn(2+) is required as a cofactor.

The catalysed reaction is 7-carboxy-7-deazaguanine + NH4(+) + ATP = 7-cyano-7-deazaguanine + ADP + phosphate + H2O + H(+). The protein operates within purine metabolism; 7-cyano-7-deazaguanine biosynthesis. Its function is as follows. Catalyzes the ATP-dependent conversion of 7-carboxy-7-deazaguanine (CDG) to 7-cyano-7-deazaguanine (preQ(0)). In Shewanella frigidimarina (strain NCIMB 400), this protein is 7-cyano-7-deazaguanine synthase.